We begin with the raw amino-acid sequence, 464 residues long: Armadillo repeat-containing protein 6 homolog (464 aa).

T9 is subject to Phosphothreonine. ARM repeat units follow at residues 235–275 (AHEH…TLAV), 287–331 (GGLK…QQGV), 332–374 (APII…FDTG), and 375–418 (IAEV…ISFG).

Belongs to the ARMC6 family.

The chain is Armadillo repeat-containing protein 6 homolog from Drosophila melanogaster (Fruit fly).